Reading from the N-terminus, the 86-residue chain is Polcalcin Nic t 2 (86 aa).

EF-hand domains follow at residues 8-42 (QDIADRERIFKRFDANGDGQISATELGETLQTLGS) and 43-78 (VTPEEVKYMMDEIDTNKDGFISFQEFIEFARANRGL). Aspartate 21, asparagine 23, aspartate 25, glutamine 27, glutamate 32, aspartate 56, asparagine 58, aspartate 60, and glutamate 67 together coordinate Ca(2+).

In Nicotiana tabacum (Common tobacco), this protein is Polcalcin Nic t 2 (Nict2).